Reading from the N-terminus, the 137-residue chain is MKVLSLLYLLTAIPGIMSDVQLQESGPGLVKPSQSLSLTCSVTGYSITSGYFWNWIRQFPGNKLEWLGFIKYDGSNGYNPSLKNRVSITRDTSENQFFLKLNSVTTEDTATYYCAGDNDHLYYFDYWGQGTTLTVSS.

A signal peptide spans 1-18 (MKVLSLLYLLTAIPGIMS). The interval 19–48 (DVQLQESGPGLVKPSQSLSLTCSVTGYSIT) is framework-1. Cysteine 40 and cysteine 114 are joined by a disulfide. Residues 49–54 (SGYFWN) form a complementarity-determining-1 region. Residues 55 to 68 (WIRQFPGNKLEWLG) form a framework-2 region. The complementarity-determining-2 stretch occupies residues 69–84 (FIKYDGSNGYNPSLKN). A framework-3 region spans residues 85 to 116 (RVSITRDTSENQFFLKLNSVTTEDTATYYCAG). The complementarity-determining-3 stretch occupies residues 117–126 (DNDHLYYFDY). The framework-4 stretch occupies residues 127–137 (WGQGTTLTVSS).

This chain is Ig heavy chain V region MOPC 315, found in Mus musculus (Mouse).